The chain runs to 441 residues: 3-phosphoshikimate 1-carboxyvinyltransferase (441 aa).

The interval 1 to 21 (MSANGPSHPARELKAGGSLSG) is disordered. The 3-phosphoshikimate site is built by Lys29, Ser30, and Arg34. Lys29 provides a ligand contact to phosphoenolpyruvate. The phosphoenolpyruvate site is built by Gly103 and Arg132. 3-phosphoshikimate-binding residues include Ser177, Gln179, Asp328, and Lys355. Gln179 is a phosphoenolpyruvate binding site. The active-site Proton acceptor is Asp328. The phosphoenolpyruvate site is built by Arg359 and Arg401.

This sequence belongs to the EPSP synthase family. Monomer.

It localises to the cytoplasm. It carries out the reaction 3-phosphoshikimate + phosphoenolpyruvate = 5-O-(1-carboxyvinyl)-3-phosphoshikimate + phosphate. It functions in the pathway metabolic intermediate biosynthesis; chorismate biosynthesis; chorismate from D-erythrose 4-phosphate and phosphoenolpyruvate: step 6/7. Catalyzes the transfer of the enolpyruvyl moiety of phosphoenolpyruvate (PEP) to the 5-hydroxyl of shikimate-3-phosphate (S3P) to produce enolpyruvyl shikimate-3-phosphate and inorganic phosphate. The sequence is that of 3-phosphoshikimate 1-carboxyvinyltransferase from Parasynechococcus marenigrum (strain WH8102).